A 357-amino-acid polypeptide reads, in one-letter code: 3-dehydroquinate synthase (357 aa).

NAD(+) is bound by residues 104-108 (GVVGD), 128-129 (TT), Lys141, and 168-171 (FLET). Residues Glu183, His243, and His260 each coordinate Zn(2+).

It belongs to the sugar phosphate cyclases superfamily. Dehydroquinate synthase family. It depends on NAD(+) as a cofactor. Co(2+) serves as cofactor. The cofactor is Zn(2+).

The protein localises to the cytoplasm. It catalyses the reaction 7-phospho-2-dehydro-3-deoxy-D-arabino-heptonate = 3-dehydroquinate + phosphate. It participates in metabolic intermediate biosynthesis; chorismate biosynthesis; chorismate from D-erythrose 4-phosphate and phosphoenolpyruvate: step 2/7. Its function is as follows. Catalyzes the conversion of 3-deoxy-D-arabino-heptulosonate 7-phosphate (DAHP) to dehydroquinate (DHQ). The sequence is that of 3-dehydroquinate synthase from Streptococcus pyogenes serotype M18 (strain MGAS8232).